The primary structure comprises 292 residues: Aspartate carbamoyltransferase catalytic subunit (292 aa).

R49 and T50 together coordinate carbamoyl phosphate. K77 contributes to the L-aspartate binding site. Residues R99, H127, and Q130 each coordinate carbamoyl phosphate. Residues R161 and R211 each coordinate L-aspartate. The carbamoyl phosphate site is built by G250 and P251.

The protein belongs to the aspartate/ornithine carbamoyltransferase superfamily. ATCase family. Heterododecamer (2C3:3R2) of six catalytic PyrB chains organized as two trimers (C3), and six regulatory PyrI chains organized as three dimers (R2).

The catalysed reaction is carbamoyl phosphate + L-aspartate = N-carbamoyl-L-aspartate + phosphate + H(+). The protein operates within pyrimidine metabolism; UMP biosynthesis via de novo pathway; (S)-dihydroorotate from bicarbonate: step 2/3. Its function is as follows. Catalyzes the condensation of carbamoyl phosphate and aspartate to form carbamoyl aspartate and inorganic phosphate, the committed step in the de novo pyrimidine nucleotide biosynthesis pathway. In Campylobacter lari (strain RM2100 / D67 / ATCC BAA-1060), this protein is Aspartate carbamoyltransferase catalytic subunit.